Reading from the N-terminus, the 321-residue chain is Ribose-phosphate pyrophosphokinase 1 (321 aa).

Mg(2+) is bound by residues D131, H133, D142, and D146.

It belongs to the ribose-phosphate pyrophosphokinase family.

The catalysed reaction is D-ribose 5-phosphate + ATP = 5-phospho-alpha-D-ribose 1-diphosphate + AMP + H(+). The protein is Ribose-phosphate pyrophosphokinase 1 (PRS1) of Candida albicans (Yeast).